Consider the following 5478-residue polypeptide: MLVIWILTLALRLCASVTTVTPEGSAVHKAISQQGTLWTGEVLEKQTVEQGKSTLRRQKNHFHRSAGELRCRNALKDEGASAGWSVMFAGESVVVLVHLWMTGARVKNLGLVEFASPGDDGDGRAEGFSLGLPLSEQARAAGAREKERQETVINHSTFSGFSQITGSTVNTSIGGNTTSASTPSSSDPFTTFSDYGVSVTFITGSTATKHFLDSSTNSGHSEESTVSHSGPGATGTTLFPSHSATSVFVGEPKTSPITSASMETTALPGSTTTAGLSEKSTTFYSSPRSPDRTLSPARTTSSGVSEKSTTSHSRPGPTHTIAFPDSTTMPGVSQESTASHSIPGSTDTTLSPGTTTPSSLGPESTTFHSSPGYTKTTRLPDNTTTSGLLEASTPVHSSTGSPHTTLSPSSSTTHEGEPTTFQSWPSSKDTSPAPSGTTSAFVKLSTTYHSSPSSTPTTHFSASSTTLGHSEESTPVHSSPVATATTPPPARSATSGHVEESTAYHRSPGSTQTMHFPESSTTSGHSEESATFHGSTTHTKSSTPSTTAALAHTSYHSSLGSTETTHFRDSSTISGRSEESKASHSSPDAMATTVLPAGSTPSVLVGDSTPSPISSGSMETTALPGSTTKPGLSEKSTTFYSSPRSPDTTHLPASMTSSGVSEESTTSHSRPGSTHTTAFPGSTTMPGLSQESTASHSSPGPTDTTLSPGSTTASSLGPEYTTFHSRPGSTETTLLPDNTTASGLLEASMPVHSSTRSPHTTLSPAGSTTRQGESTTFHSWPSSKDTRPAPPTTTSAFVEPSTTSHGSPSSIPTTHISARSTTSGLVEESTTYHSSPGSTQTMHFPESDTTSGRGEESTTSHSSTTHTISSAPSTTSALVEEPTSYHSSPGSTATTHFPDSSTTSGRSEESTASHSSQDATGTIVLPARSTTSVLLGESTTSPISSGSMETTALPGSTTTPGLSERSTTFHSSPRSPATTLSPASTTSSGVSEESTTSRSRPGSTHTTAFPDSTTTPGLSRHSTTSHSSPGSTDTTLLPASTTTSGPSQESTTSHSSSGSTDTALSPGSTTALSFGQESTTFHSNPGSTHTTLFPDSTTSSGIVEASTRVHSSTGSPRTTLSPASSTSPGLQGESTAFQTHPASTHTTPSPPSTATAPVEESTTYHRSPGSTPTTHFPASSTTSGHSEKSTIFHSSPDASGTTPSSAHSTTSGRGESTTSRISPGSTEITTLPGSTTTPGLSEASTTFYSSPRSPTTTLSPASMTSLGVGEESTTSRSQPGSTHSTVSPASTTTPGLSEESTTVYSSSRGSTETTVFPHSTTTSVHGEEPTTFHSRPASTHTTLFTEDSTTSGLTEESTAFPGSPASTQTGLPATLTTADLGEESTTFPSSSGSTGTKLSPARSTTSGLVGESTPSRLSPSSTETTTLPGSPTTPSLSEKSTTFYTSPRSPDATLSPATTTSSGVSEESSTSHSQPGSTHTTAFPDSTTTSDLSQEPTTSHSSQGSTEATLSPGSTTASSLGQQSTTFHSSPGDTETTLLPDDTITSGLVEASTPTHSSTGSLHTTLTPASSTSAGLQEESTTFQSWPSSSDTTPSPPGTTAAPVEVSTTYHSRPSSTPTTHFSASSTTLGRSEESTTVHSSPGATGTALFPTRSATSVLVGEPTTSPISSGSTETTALPGSTTTAGLSEKSTTFYSSPRSPDTTLSPASTTSSGVSEESTTSHSRPGSTHTTAFPGSTTMPGVSQESTASHSSPGSTDTTLSPGSTTASSLGPESTTFHSSPGSTETTLLPDNTTASGLLEASTPVHSSTGSPHTTLSPAGSTTRQGESTTFQSWPSSKDTMPAPPTTTSAFVELSTTSHGSPSSTPTTHFSASSTTLGRSEESTTVHSSPVATATTPSPARSTTSGLVEESTAYHSSPGSTQTMHFPESSTASGRSEESRTSHSSTTHTISSPPSTTSALVEEPTSYHSSPGSTATTHFPDSSTTSGRSEESTASHSSQDATGTIVLPARSTTSVLLGESTTSPISSGSMETTALPGSTTTPGLSEKSTTFHSSPRSPATTLSPASTTSSGVSEESTTSHSRPGSTHTTAFPDSTTTPGLSRHSTTSHSSPGSTDTTLLPASTTTSGPSQESTTSHSSPGSTDTALSPGSTTALSFGQESTTFHSSPGSTHTTLFPDSTTSSGIVEASTRVHSSTGSPRTTLSPASSTSPGLQGESTAFQTHPASTHTTPSPPSTATAPVEESTTYHRSPGSTPTTHFPASSTTSGHSEKSTIFHSSPDASGTTPSSAHSTTSGRGESTTSRISPGSTEITTLPGSTTTPGLSEASTTFYSSPRSPTTTLSPASMTSLGVGEESTTSRSQPGSTHSTVSPASTTTPGLSEESTTVYSSSPGSTETTVFPRTPTTSVRGEEPTTFHSRPASTHTTLFTEDSTTSGLTEESTAFPGSPASTQTGLPATLTTADLGEESTTFPSSSGSTGTTLSPARSTTSGLVGESTPSRLSPSSTETTTLPGSPTTPSLSEKSTTFYTSPRSPDATLSPATTTSSGVSEESSTSHSQPGSTHTTAFPDSTTTPGLSRHSTTSHSSPGSTDTTLLPASTTTSGPSQESTTSHSSPGSTDTALSPGSTTALSFGQESTTFHSSPGSTHTTLFPDSTTSSGIVEASTRVHSSTGSPRTTLSPASSTSPGLQGESTTFQTHPASTHTTPSPPSTATAPVEESTTYHRSPGSTPTTHFPASSTTSGHSEKSTIFHSSPDASGTTPSSAHSTTSGRGESTTSRISPGSTEITTLPGSTTTPGLSEASTTFYSSPRSPTTTLSPASMTSLGVGEESTTSRSQPGSTHSTVSPASTTTPGLSEESTTVYSSSPGSTETTVFPRSTTTSVRGEEPTTFHSRPASTHTTLFTEDSTTSGLTEESTAFPGSPASTQTGLPATLTTADLGEESTTFPSSSGSTGTTLSPARSTTSGLVGESTPSRLSPSSTETTTLPGSPTTPSLSEKSTTFYTSPRSPDATLSPATTTSSGVSEESSTSHSQPGSTHTTAFPDSTTTSGLSQEPTASHSSQGSTEATLSPGSTTASSLGQQSTTFHSSPGDTETTLLPDDTITSGLVEASTPTHSSTGSLHTTLTPASSTSAGLQEESTTFQSWPSSSDTTPSPPGTTAAPVEVSTTYHSRPSSTPTTHFSASSTTLGRSEESTTVHSSPGATGTALFPTRSATSVLVGEPTTSPISSGSTETTALPGSTTTAGLSEKSTTFYSSPRSPDTTLSPASTTSSGVSEESTTSHSRPGSTHTTAFPGSTTMPGVSQESTASHSSPGSTDTTLSPGSTTASSLGPESTTFHSGPGSTETTLLPDNTTASGLLEASTPVHSSTGSPHTTLSPAGSTTRQGESTTFQSWPNSKDTTPAPPTTTSAFVELSTTSHGSPSSTPTTHFSASSTTLGRSEESTTVHSSPVATATTPSPARSTTSGLVEESTTYHSSPGSTQTMHFPESDTTSGRGEESTTSHSSTTHTISSAPSTTSALVEEPTSYHSSPGSTATTHFPDSSTTSGRSEESTASHSSQDATGTIVLPARSTTSVLLGESTTSPISSGSMETTALPGSTTTPGLSEKSTTFHSSPRSPATTLSPASTTSSGVSEESTTSHSRPGSTHTTAFPDSTTTPGLSRHSTTSHSSPGSTDTTLLPASTTTSGSSQESTTSHSSSGSTDTALSPGSTTALSFGQESTTFHSSPGSTHTTLFPDSTTSSGIVEASTRVHSSTGSPRTTLSPASSTSPGLQGESTAFQTHPASTHTTPSPPSTATAPVEESTTYHRSPGSTPTTHFPASSTTSGHSEKSTIFHSSPDASGTTPSSAHSTTSGRGESTTSRISPGSTEITTLPGSTTTPGLSEASTTFYSSPRSPTTTLSPASMTSLGVGEESTTSRSQPGSTHSTVSPASTTTPGLSEESTTVYSSSPGSTETTVFPRSTTTSVRREEPTTFHSRPASTHTTLFTEDSTTSGLTEESTAFPGSPASTQTGLPATLTTADLGEESTTFPSSSGSTGTKLSPARSTTSGLVGESTPSRLSPSSTETTTLPGSPTTPSLSEKSTTFYTSPRSPDATLSPATTTSSGVSEESSTSHSQPGSTHTTAFPDSTTTSGLSQEPTTSHSSQGSTEATLSPGSTTASSLGQQSTTFHSSPGDTETTLLPDDTITSGLVEASTPTHSSTGSLHTTLTPASSTSTGLQEESTTFQSWPSSSDTTPSPPSTTAVPVEVSTTYHSRPSSTPTTHFSASSTTLGRSEESTTVHSSPGATGTALFPTRSATSVLVGEPTTSPISSGSTETTALPGSTTTAGLSEKSTTFYSSPRSPDTTLSPASTTSSGVSEESTTSHSRPGSMHTTAFPSSTTMPGVSQESTASHSSPGSTDTTLSPGSTTASSLGPESTTFHSSPGSTETTLLPDNTTASGLLEASTPVHSSTGSPHTTLSPAGSTTRQGESTTFQSWPNSKDTTPAPPTTTSAFVELSTTSHGSPSSTPTTHFSASSTTLGRSEESTTVHSSPVATATTPSPARSTTSGLVEESTTYHSSPGSTQTMHFPESNTTSGRGEESTTSHSSTTHTISSAPSTTSALVEEPTSYHSSPGSTATTHFPDSSTTSGRSEESTASHSSQDATGTIVLPARSTTSVLLGESTTSPISSGSMETTALPGSTTTPGLSEKSTTFHSSPSSTPTTHFSASSTTLGRSEESTTVHSSPVATATTPSPARSTTSGLVEESTAYHSSPGSTQTMHFPESSTASGRSEESRTSHSSTTHTISSPPSTTSALVEEPTSYHSSPGSIATTHFPESSTTSGRSEESTASHSSPDTNGITPLPAHFTTSGRIAESTTFYISPGSMETTLASTATTPGLSAKSTILYSSSRSPDQTLSPASMTSSSISGEPTSLYSQAESTHTTAFPASTTTSGLSQESTTFHSKPGSTETTLSPGSITTSSFAQEFTTPHSQPGSALSTVSPASTTVPGLSEESTTFYSSPGSTETTAFSHSNTMSIHSQQSTPFPDSPGFTHTVLPATLTTTDIGQESTAFHSSSDATGTTPLPARSTASDLVGEPTTFYISPSPTYTTLFPASSSTSGLTEESTTFHTSPSFTSTIVSTESLETLAPGLCQEGQIWNGKQCVCPQGYVGYQCLSPLESFPVETPEKLNATLGMTVKVTYRNFTEKMNDASSQEYQNFSTLFKNRMDVVLKGDNLPQYRGVNIRRLLNGSIVVKNDVILEADYTLEYEELFENLAEIVKAKIMNETRTTLLDPDSCRKAILCYSEEDTFVDSSVTPGFDFQEQCTQKAAEGYTQFYYVDVLDGKLACVNKCTKGTKSQMNCNLGTCQLQRSGPRCLCPNTNTHWYWGETCEFNIAKSLVYGIVGAVMAVLLLALIILIILFSLSQRKRHREQYDVPQEWRKEGTPGIFQKTAIWEDQNLRESRFGLENAYNNFRPTLETVDSGTELHIQRPEMVASTV.

A signal peptide spans 1-16 (MLVIWILTLALRLCAS). Topologically, residues 17 to 5380 (VTTVTPEGSA…EFNIAKSLVY (5364 aa)) are extracellular. Residues Asn154, Asn170, and Asn176 are each glycosylated (N-linked (GlcNAc...) asparagine). A disordered region spans residues 212 to 737 (LDSSTNSGHS…GSTETTLLPD (526 aa)). Copy 1 of the repeat occupies 222–240 (EESTVSHSGPGATGTTLFP). The segment at 222–4761 (EESTVSHSGP…PGSTQTMHFP (4540 aa)) is 28 X 19 AA approximate tandem repeats of E-E-S-X-X-X-H-X-X-P-X-X-T-X-T-X-X-X-P. Polar residues-rich tracts occupy residues 226-246 (VSHS…SATS), 255-288 (SPIT…SSPR), 296-313 (PART…TSHS), and 325-342 (DSTT…SHSI). Residues 343 to 366 (PGSTDTTLSPGTTTPSSLGPESTT) are compositionally biased toward low complexity. Residues 367–387 (FHSSPGYTKTTRLPDNTTTSG) show a composition bias toward polar residues. The N-linked (GlcNAc...) asparagine glycan is linked to Asn382. The segment covering 396 to 413 (HSSTGSPHTTLSPSSSTT) has biased composition (low complexity). The segment covering 419 to 440 (TTFQSWPSSKDTSPAPSGTTSA) has biased composition (polar residues). 2 stretches are compositionally biased toward low complexity: residues 445–466 (STTY…SSTT) and 478–495 (SSPV…SATS). Tandem repeats lie at residues 471–489 (EEST…TPPP) and 499–517 (EEST…MHFP). Residues 531–554 (TFHGSTTHTKSSTPSTTAALAHTS) are compositionally biased toward low complexity. Composition is skewed to polar residues over residues 555-575 (YHSS…TISG) and 608-648 (STPS…SPDT). Low complexity predominate over residues 654–669 (SMTSSGVSEESTTSHS). Repeat unit 4 spans residues 662–680 (EESTTSHSRPGSTHTTAFP). Polar residues-rich tracts occupy residues 670-715 (RPGS…TASS) and 722-737 (TFHS…LLPD). Asn738 carries an N-linked (GlcNAc...) asparagine glycan. Disordered stretches follow at residues 749-4847 (MPVH…HFTT), 4887-5034 (SSRS…THTV), 5048-5071 (STAF…TASD), and 5093-5112 (ASSS…TSPS). Composition is skewed to polar residues over residues 751 to 783 (VHSS…WPSS) and 792 to 842 (TTTS…TQTM). Copy 5 of the repeat occupies 827 to 845 (EESTTYHSSPGSTQTMHFP). Positions 859–877 (TSHSSTTHTISSAPSTTSA) are enriched in low complexity. Polar residues-rich tracts occupy residues 884–899 (SYHS…HFPD) and 928–970 (RSTT…TTFH). Positions 971-1007 (SSPRSPATTLSPASTTSSGVSEESTTSRSRPGSTHTT) are enriched in low complexity. Residues 1009-1021 (FPDSTTTPGLSRH) show a composition bias toward polar residues. The segment covering 1022 to 1065 (STTSHSSPGSTDTTLLPASTTTSGPSQESTTSHSSSGSTDTALS) has biased composition (low complexity). Composition is skewed to polar residues over residues 1066-1101 (PGST…TSSG) and 1108-1138 (RVHS…TAFQ). Low complexity predominate over residues 1139 to 1157 (THPASTHTTPSPPSTATAP). The stretch at 1159-1177 (EESTTYHRSPGSTPTTHFP) is repeat 6. 2 stretches are compositionally biased toward polar residues: residues 1160 to 1184 (ESTT…TTSG) and 1191 to 1207 (IFHS…SSAH). Low complexity-rich tracts occupy residues 1208–1220 (STTS…TTSR), 1229–1241 (TTLP…PGLS), and 1249–1262 (SSPR…SPAS). Composition is skewed to polar residues over residues 1271–1324 (ESTT…TTSV), 1331–1357 (TFHS…TEES), and 1364–1377 (PAST…TLTT). 2 stretches are compositionally biased toward low complexity: residues 1384–1396 (STTF…STGT) and 1411–1438 (ESTP…SLSE). Over residues 1439–1448 (KSTTFYTSPR) the composition is skewed to polar residues. The span at 1458-1481 (TTTSSGVSEESSTSHSQPGSTHTT) shows a compositional bias: low complexity. The stretch at 1466–1484 (EESSTSHSQPGSTHTTAFP) is repeat 7. Residues 1483–1537 (FPDSTTTSDLSQEPTTSHSSQGSTEATLSPGSTTASSLGQQSTTFHSSPGDTETT) show a composition bias toward polar residues. Residues 1552 to 1568 (STPTHSSTGSLHTTLTP) are compositionally biased toward low complexity. Polar residues-rich tracts occupy residues 1569–1586 (ASST…FQSW) and 1606–1630 (VSTT…TTLG). Repeat unit 8 spans residues 1633-1651 (EESTTVHSSPGATGTALFP). Positions 1653–1708 (RSATSVLVGEPTTSPISSGSTETTALPGSTTTAGLSEKSTTFYSSPRSPDTTLSPA) are enriched in polar residues. Residues 1709–1724 (STTSSGVSEESTTSHS) show a composition bias toward low complexity. Residues 1717-1735 (EESTTSHSRPGSTHTTAFP) form repeat 9. Polar residues-rich tracts occupy residues 1725–1797 (RPGS…TTAS) and 1805–1840 (PVHS…SSKD). N-linked (GlcNAc...) asparagine glycosylation occurs at Asn1793. 2 stretches are compositionally biased toward low complexity: residues 1856–1877 (STTS…SSTT) and 1889–1906 (SSPV…STTS). 2 tandem repeats follow at residues 1882–1900 (EEST…TPSP) and 1910–1928 (EEST…MHFP). Over residues 1914-1935 (AYHSSPGSTQTMHFPESSTASG) the composition is skewed to polar residues. The segment covering 1943–1959 (SHSSTTHTISSPPSTTS) has biased composition (low complexity). Polar residues-rich tracts occupy residues 1967–1982 (SYHS…HFPD) and 2011–2053 (RSTT…TTFH). Positions 2054–2082 (SSPRSPATTLSPASTTSSGVSEESTTSHS) are enriched in low complexity. Repeat 12 spans residues 2075-2093 (EESTTSHSRPGSTHTTAFP). The segment covering 2083 to 2104 (RPGSTHTTAFPDSTTTPGLSRH) has biased composition (polar residues). A compositionally biased stretch (low complexity) spans 2105 to 2130 (STTSHSSPGSTDTTLLPASTTTSGPS). Composition is skewed to polar residues over residues 2131-2184 (QEST…TSSG) and 2191-2221 (RVHS…TAFQ). The span at 2222–2240 (THPASTHTTPSPPSTATAP) shows a compositional bias: low complexity. Repeat 13 spans residues 2242–2260 (EESTTYHRSPGSTPTTHFP). Composition is skewed to polar residues over residues 2243–2267 (ESTT…TTSG) and 2274–2290 (IFHS…SSAH). Composition is skewed to low complexity over residues 2291-2303 (STTS…TTSR), 2312-2324 (TTLP…PGLS), and 2332-2345 (SSPR…SPAS). A compositionally biased stretch (polar residues) spans 2354–2392 (ESTTSRSQPGSTHSTVSPASTTTPGLSEESTTVYSSSPG). Over residues 2393 to 2407 (STETTVFPRTPTTSV) the composition is skewed to low complexity. Polar residues-rich tracts occupy residues 2414 to 2440 (TFHS…TEES) and 2447 to 2460 (PAST…TLTT). 2 stretches are compositionally biased toward low complexity: residues 2467–2483 (STTF…TLSP) and 2494–2521 (ESTP…SLSE). Over residues 2522-2531 (KSTTFYTSPR) the composition is skewed to polar residues. Residues 2541-2564 (TTTSSGVSEESSTSHSQPGSTHTT) show a composition bias toward low complexity. Copy 14 of the repeat occupies 2549–2567 (EESSTSHSQPGSTHTTAFP). The span at 2566–2578 (FPDSTTTPGLSRH) shows a compositional bias: polar residues. The segment covering 2579–2604 (STTSHSSPGSTDTTLLPASTTTSGPS) has biased composition (low complexity). 2 stretches are compositionally biased toward polar residues: residues 2605 to 2658 (QEST…TSSG) and 2665 to 2695 (RVHS…TTFQ). Positions 2696 to 2714 (THPASTHTTPSPPSTATAP) are enriched in low complexity. Copy 15 of the repeat occupies 2716–2734 (EESTTYHRSPGSTPTTHFP). Polar residues-rich tracts occupy residues 2717 to 2741 (ESTT…TTSG) and 2748 to 2764 (IFHS…SSAH). 3 stretches are compositionally biased toward low complexity: residues 2765–2777 (STTS…TTSR), 2786–2798 (TTLP…PGLS), and 2806–2819 (SSPR…SPAS). 3 stretches are compositionally biased toward polar residues: residues 2828-2881 (ESTT…TTSV), 2888-2914 (TFHS…TEES), and 2921-2934 (PAST…TLTT). 2 stretches are compositionally biased toward low complexity: residues 2941-2957 (STTF…TLSP) and 2968-2995 (ESTP…SLSE). Over residues 2996–3005 (KSTTFYTSPR) the composition is skewed to polar residues. Residues 3015–3038 (TTTSSGVSEESSTSHSQPGSTHTT) show a composition bias toward low complexity. Repeat unit 16 spans residues 3023–3041 (EESSTSHSQPGSTHTTAFP). Positions 3040–3094 (FPDSTTTSGLSQEPTASHSSQGSTEATLSPGSTTASSLGQQSTTFHSSPGDTETT) are enriched in polar residues. The segment covering 3109–3125 (STPTHSSTGSLHTTLTP) has biased composition (low complexity). 2 stretches are compositionally biased toward polar residues: residues 3126–3143 (ASST…FQSW) and 3163–3187 (VSTT…TTLG). Copy 17 of the repeat occupies 3190–3208 (EESTTVHSSPGATGTALFP). The segment covering 3210-3265 (RSATSVLVGEPTTSPISSGSTETTALPGSTTTAGLSEKSTTFYSSPRSPDTTLSPA) has biased composition (polar residues). A compositionally biased stretch (low complexity) spans 3266 to 3281 (STTSSGVSEESTTSHS). Copy 18 of the repeat occupies 3274–3292 (EESTTSHSRPGSTHTTAFP). Polar residues-rich tracts occupy residues 3282–3354 (RPGS…TTAS) and 3362–3397 (PVHS…NSKD). Asn3350 is a glycosylation site (N-linked (GlcNAc...) asparagine). 2 stretches are compositionally biased toward low complexity: residues 3413–3434 (STTS…SSTT) and 3446–3463 (SSPV…STTS). 2 repeat units span residues 3439 to 3457 (EEST…TPSP) and 3467 to 3485 (EEST…MHFP). Over residues 3468 to 3482 (ESTTYHSSPGSTQTM) the composition is skewed to polar residues. Over residues 3499–3517 (TSHSSTTHTISSAPSTTSA) the composition is skewed to low complexity. Composition is skewed to polar residues over residues 3524 to 3539 (SYHS…HFPD) and 3568 to 3610 (RSTT…TTFH). Positions 3611 to 3639 (SSPRSPATTLSPASTTSSGVSEESTTSHS) are enriched in low complexity. Residues 3632–3650 (EESTTSHSRPGSTHTTAFP) form repeat 21. A compositionally biased stretch (polar residues) spans 3640 to 3661 (RPGSTHTTAFPDSTTTPGLSRH). Positions 3662 to 3705 (STTSHSSPGSTDTTLLPASTTTSGSSQESTTSHSSSGSTDTALS) are enriched in low complexity. Polar residues-rich tracts occupy residues 3706-3741 (PGST…TSSG) and 3748-3778 (RVHS…TAFQ). Residues 3779-3797 (THPASTHTTPSPPSTATAP) are compositionally biased toward low complexity. Copy 22 of the repeat occupies 3799–3817 (EESTTYHRSPGSTPTTHFP). 2 stretches are compositionally biased toward polar residues: residues 3800 to 3824 (ESTT…TTSG) and 3831 to 3847 (IFHS…SSAH). Low complexity-rich tracts occupy residues 3848–3860 (STTS…TTSR), 3869–3881 (TTLP…PGLS), and 3889–3902 (SSPR…SPAS). Composition is skewed to polar residues over residues 3911–3963 (ESTT…TTTS), 3971–3997 (TFHS…TEES), and 4004–4017 (PAST…TLTT). Composition is skewed to low complexity over residues 4024–4036 (STTF…STGT) and 4051–4078 (ESTP…SLSE). Residues 4079 to 4088 (KSTTFYTSPR) are compositionally biased toward polar residues. The span at 4098 to 4121 (TTTSSGVSEESSTSHSQPGSTHTT) shows a compositional bias: low complexity. The stretch at 4106-4124 (EESSTSHSQPGSTHTTAFP) is repeat 23. Positions 4123-4177 (FPDSTTTSGLSQEPTTSHSSQGSTEATLSPGSTTASSLGQQSTTFHSSPGDTETT) are enriched in polar residues. Over residues 4192–4208 (STPTHSSTGSLHTTLTP) the composition is skewed to low complexity. Residues 4209 to 4226 (ASSTSTGLQEESTTFQSW) show a composition bias toward polar residues. Residues 4227–4249 (PSSSDTTPSPPSTTAVPVEVSTT) show a composition bias toward low complexity. Residues 4250 to 4270 (YHSRPSSTPTTHFSASSTTLG) show a composition bias toward polar residues. Copy 24 of the repeat occupies 4273-4291 (EESTTVHSSPGATGTALFP). Positions 4293–4348 (RSATSVLVGEPTTSPISSGSTETTALPGSTTTAGLSEKSTTFYSSPRSPDTTLSPA) are enriched in polar residues. Over residues 4349-4364 (STTSSGVSEESTTSHS) the composition is skewed to low complexity. Polar residues-rich tracts occupy residues 4369–4437 (MHTT…TTAS) and 4445–4480 (PVHS…NSKD). The N-linked (GlcNAc...) asparagine glycan is linked to Asn4433. 2 stretches are compositionally biased toward low complexity: residues 4496 to 4517 (STTS…SSTT) and 4529 to 4546 (SSPV…STTS). A run of 2 repeats spans residues 4522–4540 (EEST…TPSP) and 4550–4568 (EEST…MHFP). Polar residues predominate over residues 4551–4571 (ESTTYHSSPGSTQTMHFPESN). A glycan (N-linked (GlcNAc...) asparagine) is linked at Asn4571. Residues 4582-4600 (TSHSSTTHTISSAPSTTSA) show a composition bias toward low complexity. Polar residues-rich tracts occupy residues 4607 to 4622 (SYHS…HFPD) and 4651 to 4688 (RSTT…LSEK). 2 stretches are compositionally biased toward low complexity: residues 4689–4710 (STTF…SSTT) and 4722–4739 (SSPV…STTS). 2 tandem repeats follow at residues 4715–4733 (EEST…TPSP) and 4743–4761 (EEST…MHFP). Polar residues predominate over residues 4747–4768 (AYHSSPGSTQTMHFPESSTASG). Residues 4776-4792 (SHSSTTHTISSPPSTTS) show a composition bias toward low complexity. 2 stretches are compositionally biased toward polar residues: residues 4800 to 4814 (SYHS…THFP) and 4887 to 4917 (SSRS…SQAE). Over residues 4918–4931 (STHTTAFPASTTTS) the composition is skewed to low complexity. Composition is skewed to polar residues over residues 4932-5024 (GLSQ…STPF) and 5048-5061 (STAF…TGTT). Residues 5094-5112 (SSSTSGLTEESTTFHTSPS) are compositionally biased toward low complexity. The EGF-like domain occupies 5116–5154 (TIVSTESLETLAPGLCQEGQIWNGKQCVCPQGYVGYQCL). Cys5144 and Cys5153 are disulfide-bonded. One can recognise an SEA domain in the interval 5168 to 5275 (LNATLGMTVK…TRTTLLDPDS (108 aa)). 5 N-linked (GlcNAc...) asparagine glycosylation sites follow: Asn5169, Asn5182, Asn5197, Asn5228, and Asn5264. The short motif at 5226–5233 (LLNGSIVV) is the Cleavage motif element. Residues 5381–5401 (GIVGAVMAVLLLALIILIILF) traverse the membrane as a helical segment. Topologically, residues 5402–5478 (SLSQRKRHRE…QRPEMVASTV (77 aa)) are cytoplasmic.

As to expression, ubiquitous, with higher expression in colon. Down-regulated in colorectal cancer as well as in the colon of patients with ulcerative colitis (UC) and Crohn's disease (CD).

It is found in the membrane. Functionally, involved in epithelial cell protection, adhesion modulation, and signaling. May be involved in epithelial cell growth regulation. Stimulated by both cytokine TNF-alpha and TGF-beta in intestinal epithelium. This Homo sapiens (Human) protein is Mucin-12 (MUC12).